Consider the following 402-residue polypeptide: Deoxyguanosinetriphosphate triphosphohydrolase-like protein (402 aa).

The region spanning 69–217 (RLTHSLEVAQ…AAIADDIAYD (149 aa)) is the HD domain.

This sequence belongs to the dGTPase family. Type 2 subfamily.

In Bradyrhizobium diazoefficiens (strain JCM 10833 / BCRC 13528 / IAM 13628 / NBRC 14792 / USDA 110), this protein is Deoxyguanosinetriphosphate triphosphohydrolase-like protein.